Reading from the N-terminus, the 355-residue chain is MLIFPLINDLSRKIIHVDMDAFFAAIEVRDSPALKGKPVIIGADPRLSGGRGVVSTCNYEARAFGIHSAMSSKEAYERCPQAIFISGNYEKYQEVGRQVREIFHRYTDLVEPMSIDEAYLDVTENKLGISSAVKIAKLIQYDIWNELHLTASAGVSYNKFLAKIASDMEKPHGLTLILPEDAVGILASLPVEKFHGVGKKTVERLHEMGVYTGQDLLDVPEMVLIDRFGRFGFDLYRKARGISNSPVKVDRVRKSSGKERTYRKLLYREEDVLKELISLCQRVAASLKRNGKKGRTIVLKVRYGDFSTLTKRHSLEVYTDQTETIEKEVRQLIEEIGKIEKGIRLLGVTVTNFQT.

Residues Ile-14–Gly-198 enclose the UmuC domain. Mg(2+) is bound by residues Asp-18 and Asp-116. Glu-117 is an active-site residue.

This sequence belongs to the DNA polymerase type-Y family. In terms of assembly, monomer. The cofactor is Mg(2+).

Its subcellular location is the cytoplasm. It carries out the reaction DNA(n) + a 2'-deoxyribonucleoside 5'-triphosphate = DNA(n+1) + diphosphate. In terms of biological role, poorly processive, error-prone DNA polymerase involved in untargeted mutagenesis. Copies undamaged DNA at stalled replication forks, which arise in vivo from mismatched or misaligned primer ends. These misaligned primers can be extended by PolIV. Exhibits no 3'-5' exonuclease (proofreading) activity. May be involved in translesional synthesis, in conjunction with the beta clamp from PolIII. The sequence is that of DNA polymerase IV from Streptococcus suis (strain 98HAH33).